The chain runs to 205 residues: Gap junction epsilon-1 protein (205 aa).

At 1–22 (MSLNYIKNFYEGCVKPPTVIGQ) the chain is on the cytoplasmic side. Residues 23–43 (FHTLFFGSVRMFFLGVLGFAV) form a helical membrane-spanning segment. The Extracellular portion of the chain corresponds to 44–74 (YGNEALHFSCDPDKREINLFCYNQFRPITPQ). 2 disulfides stabilise this stretch: Cys-53–Cys-161 and Cys-64–Cys-147. A helical transmembrane segment spans residues 75–95 (VFWALQLVIVLLPGAIFHLYA). The Cytoplasmic segment spans residues 96–111 (ACKSINQDCILQKPVY). The chain crosses the membrane as a helical span at residues 112 to 132 (TVIYVLSVLLRISLEVFAFWL). The Extracellular portion of the chain corresponds to 133 to 170 (QIHLFGFQVKPIYLCDTESLGKKPNILKCMVPEHFEKT). The helical transmembrane segment at 171-191 (IFLIAMYTFTVITMVLCVAEV) threads the bilayer. Over 192 to 205 (FEIIFRRSCFLFKR) the chain is Cytoplasmic.

It belongs to the connexin family. Beta-type (group I) subfamily. A connexon is composed of a hexamer of connexins. As to expression, highly expressed in lens, where it is mainly found in lens fibers and to a lesser extent in lens epithelium. Weakly expressed in retina. Not detected in other tissues tested.

The protein localises to the cell membrane. Mediates calcium-independent ATP release, suggesting activity as a hemichannel. Does not form functional gap junctions. May play a non-essential role in eye lens development. The chain is Gap junction epsilon-1 protein from Mus musculus (Mouse).